Reading from the N-terminus, the 265-residue chain is Uridylate kinase (265 aa).

Residues 1-29 (MTESREPHVAGSAAPRPEPANGLASGQPS) form a disordered region. 40 to 43 (KLGG) is a binding site for ATP. G81 contributes to the UMP binding site. Positions 82 and 86 each coordinate ATP. UMP contacts are provided by residues D101 and 162–169 (MGLPYFST). ATP contacts are provided by F195 and D198.

This sequence belongs to the UMP kinase family. Homohexamer.

It is found in the cytoplasm. The enzyme catalyses UMP + ATP = UDP + ADP. Its pathway is pyrimidine metabolism; CTP biosynthesis via de novo pathway; UDP from UMP (UMPK route): step 1/1. With respect to regulation, inhibited by UTP. Functionally, catalyzes the reversible phosphorylation of UMP to UDP. In Mycobacterium avium (strain 104), this protein is Uridylate kinase.